Consider the following 857-residue polypeptide: Protein ARG5,6, mitochondrial (857 aa).

Positions 341–492 constitute an N-acetyltransferase domain; sequence INRNSLRDFG…FDSSSIGSSL (152 aa). Positions 509–532 are disordered; the sequence is GFHHSTVRRNTNPNPPLSEGKQTE. The active site involves C669.

The protein in the N-terminal section; belongs to the acetylglutamate kinase family. In the C-terminal section; belongs to the NAGSA dehydrogenase family.

It is found in the mitochondrion. It carries out the reaction N-acetyl-L-glutamate 5-semialdehyde + phosphate + NADP(+) = N-acetyl-L-glutamyl 5-phosphate + NADPH + H(+). It catalyses the reaction N-acetyl-L-glutamate + ATP = N-acetyl-L-glutamyl 5-phosphate + ADP. Its pathway is amino-acid biosynthesis; L-arginine biosynthesis; N(2)-acetyl-L-ornithine from L-glutamate: step 2/4. It functions in the pathway amino-acid biosynthesis; L-arginine biosynthesis; N(2)-acetyl-L-ornithine from L-glutamate: step 3/4. This chain is Protein ARG5,6, mitochondrial (ARG5,6), found in Candida albicans (Yeast).